The following is a 356-amino-acid chain: 3-dehydroquinate synthase (356 aa).

NAD(+) contacts are provided by residues 71–76 (EGEASK), 105–109 (GVTGD), 129–130 (TS), lysine 142, and lysine 151. Zn(2+) contacts are provided by glutamate 184, histidine 247, and histidine 264.

Belongs to the sugar phosphate cyclases superfamily. Dehydroquinate synthase family. Requires Co(2+) as cofactor. Zn(2+) serves as cofactor. It depends on NAD(+) as a cofactor.

It localises to the cytoplasm. The catalysed reaction is 7-phospho-2-dehydro-3-deoxy-D-arabino-heptonate = 3-dehydroquinate + phosphate. It participates in metabolic intermediate biosynthesis; chorismate biosynthesis; chorismate from D-erythrose 4-phosphate and phosphoenolpyruvate: step 2/7. Its function is as follows. Catalyzes the conversion of 3-deoxy-D-arabino-heptulosonate 7-phosphate (DAHP) to dehydroquinate (DHQ). This is 3-dehydroquinate synthase from Lactococcus lactis subsp. cremoris (strain MG1363).